The sequence spans 349 residues: NADH-ubiquinone oxidoreductase chain 2 (349 aa).

10 helical membrane-spanning segments follow: residues Pro3–Ser23, His25–Ala45, Ala66–Ile86, Val98–Val118, Ile149–Asn171, Ile178–Ala197, Leu202–Leu219, Leu240–Phe260, Gly274–Leu294, and Phe319–Leu339.

This sequence belongs to the complex I subunit 2 family.

It is found in the mitochondrion inner membrane. The enzyme catalyses a ubiquinone + NADH + 5 H(+)(in) = a ubiquinol + NAD(+) + 4 H(+)(out). In terms of biological role, core subunit of the mitochondrial membrane respiratory chain NADH dehydrogenase (Complex I) that is believed to belong to the minimal assembly required for catalysis. Complex I functions in the transfer of electrons from NADH to the respiratory chain. The immediate electron acceptor for the enzyme is believed to be ubiquinone. The protein is NADH-ubiquinone oxidoreductase chain 2 (MT-ND2) of Salmo salar (Atlantic salmon).